The primary structure comprises 133 residues: Nickel-responsive regulator (133 aa).

Residues H76, H87, H89, and C95 each coordinate Ni(2+).

This sequence belongs to the transcriptional regulatory CopG/NikR family. In terms of assembly, homotetramer. The cofactor is Ni(2+).

Its function is as follows. Transcriptional repressor of the nikABCDE operon. Is active in the presence of excessive concentrations of intracellular nickel. The protein is Nickel-responsive regulator of Salmonella choleraesuis (strain SC-B67).